The following is a 276-amino-acid chain: Tryptophan synthase alpha chain (276 aa).

Residues glutamate 55 and aspartate 66 each act as proton acceptor in the active site.

It belongs to the TrpA family. As to quaternary structure, tetramer of two alpha and two beta chains.

The enzyme catalyses (1S,2R)-1-C-(indol-3-yl)glycerol 3-phosphate + L-serine = D-glyceraldehyde 3-phosphate + L-tryptophan + H2O. It participates in amino-acid biosynthesis; L-tryptophan biosynthesis; L-tryptophan from chorismate: step 5/5. The alpha subunit is responsible for the aldol cleavage of indoleglycerol phosphate to indole and glyceraldehyde 3-phosphate. This is Tryptophan synthase alpha chain from Gloeobacter violaceus (strain ATCC 29082 / PCC 7421).